A 105-amino-acid chain; its full sequence is Large ribosomal subunit protein bL21 (105 aa).

Belongs to the bacterial ribosomal protein bL21 family. Part of the 50S ribosomal subunit. Contacts protein L20.

This protein binds to 23S rRNA in the presence of protein L20. This Rhizobium etli (strain CIAT 652) protein is Large ribosomal subunit protein bL21.